A 219-amino-acid polypeptide reads, in one-letter code: MTNILIVEDEQNLARFIELELTHENYTVDIENDGKAGLDKALSKPYDLYILDLMLPNINGLEICRQIRQKTTTPIIIITAKSETYDKVAGLDYGADDYIVKPFDIEELLARIRAVLRRQPDKDVLDINGIIIDKDAFKVTVNGHQLELTKTEYDLLYVLAENRNHVMQREQILDHVWGYNSEVETNVVDVYIRYLRNKLKPFNKEKSIETVRGVGYVIR.

The Response regulatory domain maps to 3 to 116 (NILIVEDEQN…ELLARIRAVL (114 aa)). 4-aspartylphosphate is present on aspartate 52. The ompR/PhoB-type DNA-binding region spans 122–219 (KDVLDINGII…TVRGVGYVIR (98 aa)).

Phosphorylated by ArlS.

The protein localises to the cytoplasm. Functionally, member of the two-component regulatory system ArlS/ArlR. The sequence is that of Response regulator ArlR (arlR) from Staphylococcus epidermidis (strain ATCC 35984 / DSM 28319 / BCRC 17069 / CCUG 31568 / BM 3577 / RP62A).